A 312-amino-acid chain; its full sequence is MIEFEKPIITKIDENKDYGRFVIEPLERGYGTTLGNSLRRVLLSSLPGAAVTSIKIDGVLHEFDTIPGVREDVMQIILNVKGLAVKSYVEDEKIIELEVEGPAEVTAGDILTDSDIELVNPDHYLFTIAEGHSLRATMTVAKKRGYVPAEGNKKDDAPVGTLAVDSIYTPVKKVNYQVEPARVGSNDGFDKLTIEIMTNGTIIPEDALGLSARVLIEHLNLFTDLTEVAKATEVMKETEKVNDEKVLDRTIEELDLSVRSYNCLKRAGINTVFDLTEKSEPEMMKVRNLGRKSLEEVKVKLADLGLGLKNDK.

The segment at 1 to 226 (MIEFEKPIIT…EHLNLFTDLT (226 aa)) is alpha N-terminal domain (alpha-NTD). Residues 243 to 312 (DEKVLDRTIE…DLGLGLKNDK (70 aa)) are alpha C-terminal domain (alpha-CTD).

The protein belongs to the RNA polymerase alpha chain family. In terms of assembly, homodimer. The RNAP catalytic core consists of 2 alpha, 1 beta, 1 beta' and 1 omega subunit. When a sigma factor is associated with the core the holoenzyme is formed, which can initiate transcription.

It catalyses the reaction RNA(n) + a ribonucleoside 5'-triphosphate = RNA(n+1) + diphosphate. Its function is as follows. DNA-dependent RNA polymerase catalyzes the transcription of DNA into RNA using the four ribonucleoside triphosphates as substrates. The chain is DNA-directed RNA polymerase subunit alpha from Streptococcus pyogenes serotype M1.